We begin with the raw amino-acid sequence, 108 residues long: Peptidyl-prolyl cis-trans isomerase FKBP1C (108 aa).

Residues serine 20–glutamate 108 form the PPIase FKBP-type domain.

It belongs to the FKBP-type PPIase family. FKBP1 subfamily.

The enzyme catalyses [protein]-peptidylproline (omega=180) = [protein]-peptidylproline (omega=0). Functionally, catalyzes the cis-trans isomerization of proline imidic peptide bonds in oligopeptides. The polypeptide is Peptidyl-prolyl cis-trans isomerase FKBP1C (Homo sapiens (Human)).